The following is a 173-amino-acid chain: Invasion protein B homolog BruAb1_0366 (173 aa).

The signal sequence occupies residues 1 to 23 (MKNYRAIGLAFTFTALSSLSAFA).

It belongs to the IalB family.

This is Invasion protein B homolog BruAb1_0366 from Brucella abortus biovar 1 (strain 9-941).